The following is a 376-amino-acid chain: Putative F-box protein At3g18330 (376 aa).

An F-box domain is found at 1–46 (MPMPNLPKELVEEILSFVPATYLKRLSATCKPWNRLIHNDKRFARK).

The protein is Putative F-box protein At3g18330 of Arabidopsis thaliana (Mouse-ear cress).